Here is a 146-residue protein sequence, read N- to C-terminus: Large ribosomal subunit protein uL15 (146 aa).

Positions 1–13 (MKLHELKPAEGSR) are enriched in basic and acidic residues. Positions 1–65 (MKLHELKPAE…PLYRRLPKRG (65 aa)) are disordered. Gly residues-rich tracts occupy residues 21 to 31 (RGIGSGNGKTA) and 42 to 52 (SGGGVRPGFEG).

The protein belongs to the universal ribosomal protein uL15 family. Part of the 50S ribosomal subunit.

Binds to the 23S rRNA. This is Large ribosomal subunit protein uL15 from Halalkalibacterium halodurans (strain ATCC BAA-125 / DSM 18197 / FERM 7344 / JCM 9153 / C-125) (Bacillus halodurans).